Here is an 858-residue protein sequence, read N- to C-terminus: Bifunctional uridylyltransferase/uridylyl-removing enzyme (858 aa).

The tract at residues 1-324 (MSAHAAPSPE…PATSGITRVL (324 aa)) is uridylyltransferase. The segment at 325–681 (SADRFVEKQG…ARPSPIGDAL (357 aa)) is uridylyl-removing. One can recognise an HD domain in the interval 443-565 (VDQHILMVLR…VGNERYLTAL (123 aa)). ACT domains lie at 682 to 763 (QVLV…PSKG) and 790 to 858 (ILSV…AIAV).

The protein belongs to the GlnD family. Mg(2+) is required as a cofactor.

It catalyses the reaction [protein-PII]-L-tyrosine + UTP = [protein-PII]-uridylyl-L-tyrosine + diphosphate. The catalysed reaction is [protein-PII]-uridylyl-L-tyrosine + H2O = [protein-PII]-L-tyrosine + UMP + H(+). Its activity is regulated as follows. Uridylyltransferase (UTase) activity is inhibited by glutamine, while glutamine activates uridylyl-removing (UR) activity. Modifies, by uridylylation and deuridylylation, the PII regulatory proteins (GlnB and homologs), in response to the nitrogen status of the cell that GlnD senses through the glutamine level. Under low glutamine levels, catalyzes the conversion of the PII proteins and UTP to PII-UMP and PPi, while under higher glutamine levels, GlnD hydrolyzes PII-UMP to PII and UMP (deuridylylation). Thus, controls uridylylation state and activity of the PII proteins, and plays an important role in the regulation of nitrogen assimilation and metabolism. This is Bifunctional uridylyltransferase/uridylyl-removing enzyme from Burkholderia orbicola (strain MC0-3).